The primary structure comprises 468 residues: UDP-N-acetylmuramoyl-L-alanine--L-glutamate ligase (468 aa).

122–128 lines the ATP pocket; that stretch reads GTKGKST.

This sequence belongs to the MurCDEF family. MurD2 subfamily.

The protein resides in the cytoplasm. The catalysed reaction is UDP-N-acetyl-alpha-D-muramoyl-L-alanine + L-glutamate + ATP = UDP-N-acetyl-alpha-D-muramoyl-L-alanyl-L-glutamate + ADP + phosphate + H(+). Its pathway is cell wall biogenesis; peptidoglycan biosynthesis. In terms of biological role, cell wall formation. Catalyzes the addition of L-glutamate to the nucleotide precursor UDP-N-acetylmuramoyl-L-alanine. The polypeptide is UDP-N-acetylmuramoyl-L-alanine--L-glutamate ligase (Xylella fastidiosa (strain Temecula1 / ATCC 700964)).